Consider the following 310-residue polypeptide: Ribosomal RNA small subunit methyltransferase H (310 aa).

S-adenosyl-L-methionine-binding positions include 32 to 34 (GGH), Asp52, Phe79, Asp100, and Gln107.

It belongs to the methyltransferase superfamily. RsmH family.

It is found in the cytoplasm. It catalyses the reaction cytidine(1402) in 16S rRNA + S-adenosyl-L-methionine = N(4)-methylcytidine(1402) in 16S rRNA + S-adenosyl-L-homocysteine + H(+). Specifically methylates the N4 position of cytidine in position 1402 (C1402) of 16S rRNA. The chain is Ribosomal RNA small subunit methyltransferase H from Bacillus cereus (strain ATCC 10987 / NRS 248).